An 867-amino-acid chain; its full sequence is Cation/H(+) antiporter 23, chloroplastic (867 aa).

The next 12 helical transmembrane spans lie at 43–63 (SGST…VANL), 75–95 (LYLP…PSVL), 112–132 (MVLE…LGLG), 146–166 (VIIA…LYYL), 175–195 (IISG…PDLA), 212–232 (AMCA…FGFA), 242–262 (KMMP…IFVI), 283–303 (HVWF…ACGV), 336–356 (GILM…GFML), 362–382 (FMMV…TVIT), 393–413 (AFAI…VLNA), and 427–447 (HMTI…AFAY). Residues 848–867 (SMYEDEDEDDEEDHQYGIHR) form a disordered region. Residues 851–860 (EDEDEDDEED) are compositionally biased toward acidic residues.

The protein belongs to the monovalent cation:proton antiporter 2 (CPA2) transporter (TC 2.A.37) family. CHX (TC 2.A.37.4) subfamily. In terms of tissue distribution, specifically expressed in flower buds and pollen. Expressed in leaves, roots and stems.

Its subcellular location is the plastid. The protein resides in the chloroplast membrane. It is found in the endoplasmic reticulum membrane. Its function is as follows. Operates as a K(+)/H(+) antiporter or Na(+)/H(+) antiporter of the chloroplast envelope that functions in pH homeostasis and chloroplast development. Monovalent cation transporter with a preference for Cs(+), K(+) and Rb(+) relative to Na(+) or Li(+). Required for pollen tube guidance, but not for normal pollen development. May also be involved in the development or function of the female gametophyte. This is Cation/H(+) antiporter 23, chloroplastic (CHX23) from Arabidopsis thaliana (Mouse-ear cress).